A 72-amino-acid chain; its full sequence is MAGLSIWHVVIFAIVVILLFGTSKLKNIGKDVGGAVRDFKKSVREEDEAASLNSPRTIDAQVKTSESTSVKS.

A helical membrane pass occupies residues 1 to 21; the sequence is MAGLSIWHVVIFAIVVILLFG. A disordered region spans residues 47-72; sequence DEAASLNSPRTIDAQVKTSESTSVKS. A compositionally biased stretch (polar residues) spans 51–72; it reads SLNSPRTIDAQVKTSESTSVKS.

It belongs to the TatA/E family. The Tat system comprises two distinct complexes: a TatABC complex, containing multiple copies of TatA, TatB and TatC subunits, and a separate TatA complex, containing only TatA subunits. Substrates initially bind to the TatABC complex, which probably triggers association of the separate TatA complex to form the active translocon.

The protein localises to the cell inner membrane. In terms of biological role, part of the twin-arginine translocation (Tat) system that transports large folded proteins containing a characteristic twin-arginine motif in their signal peptide across membranes. TatA could form the protein-conducting channel of the Tat system. In Acinetobacter baumannii (strain AB307-0294), this protein is Sec-independent protein translocase protein TatA.